The primary structure comprises 327 residues: MGIGVNSDPKVVHHQSIPKPNAMAIANYRAITTKQWQTWVEAARLQALNGKLPQYIPQLSLVDPGNFALDIGDQNGIIYEAGDTDLTFSLMSVVKPFLWLYILHHRGWQWAEQKVGDRPSHLPFNSVEQLEQDGGYPRNTMVNSGAICLAGHIPGATIEQRCENFLTWLNHTAQCQLWLDQELLASVHSLPNPRNLAIAHLLAAKGYVEDATLALETYNQLCCLSGCLKDLFKLGLMLQCPQPPLQPDTTARVKATMAKAGLYEMSEAFFRRTGFICKSGVSGLILACLPAPSPTIFACYSPPLNEEGNPVAPLALLEFLAEFTSRN.

Residues Ser-92, Asn-143, Asn-195, Tyr-218, Tyr-263, and Val-281 each coordinate substrate.

The protein belongs to the glutaminase family. In terms of assembly, homotetramer.

It catalyses the reaction L-glutamine + H2O = L-glutamate + NH4(+). The sequence is that of Glutaminase from Synechocystis sp. (strain ATCC 27184 / PCC 6803 / Kazusa).